The primary structure comprises 378 residues: Aminomethyltransferase (378 aa).

The protein belongs to the GcvT family. The glycine cleavage system is composed of four proteins: P, T, L and H.

The enzyme catalyses N(6)-[(R)-S(8)-aminomethyldihydrolipoyl]-L-lysyl-[protein] + (6S)-5,6,7,8-tetrahydrofolate = N(6)-[(R)-dihydrolipoyl]-L-lysyl-[protein] + (6R)-5,10-methylene-5,6,7,8-tetrahydrofolate + NH4(+). The glycine cleavage system catalyzes the degradation of glycine. This is Aminomethyltransferase from Acidobacterium capsulatum (strain ATCC 51196 / DSM 11244 / BCRC 80197 / JCM 7670 / NBRC 15755 / NCIMB 13165 / 161).